The chain runs to 284 residues: Polyamine aminopropyltransferase (284 aa).

The 236-residue stretch at 2 to 237 (ELWYTEEQTQ…GYWLFGFASK (236 aa)) folds into the PABS domain. Residue Q31 participates in S-methyl-5'-thioadenosine binding. H62 and D86 together coordinate spermidine. S-methyl-5'-thioadenosine contacts are provided by residues E106 and 137–138 (DG). D155 serves as the catalytic Proton acceptor. Position 155–158 (155–158 (DSTD)) interacts with spermidine. P162 is a binding site for S-methyl-5'-thioadenosine.

Belongs to the spermidine/spermine synthase family. As to quaternary structure, homodimer or homotetramer.

It is found in the cytoplasm. The catalysed reaction is S-adenosyl 3-(methylsulfanyl)propylamine + putrescine = S-methyl-5'-thioadenosine + spermidine + H(+). Its pathway is amine and polyamine biosynthesis; spermidine biosynthesis; spermidine from putrescine: step 1/1. Functionally, catalyzes the irreversible transfer of a propylamine group from the amino donor S-adenosylmethioninamine (decarboxy-AdoMet) to putrescine (1,4-diaminobutane) to yield spermidine. This Alkaliphilus metalliredigens (strain QYMF) protein is Polyamine aminopropyltransferase.